The following is a 509-amino-acid chain: Maturase K (509 aa).

This sequence belongs to the intron maturase 2 family. MatK subfamily.

Its subcellular location is the plastid. The protein resides in the chloroplast. Functionally, usually encoded in the trnK tRNA gene intron. Probably assists in splicing its own and other chloroplast group II introns. The protein is Maturase K of Abies firma (Momi fir).